A 228-amino-acid chain; its full sequence is Claudin-10 (228 aa).

The helical transmembrane segment at 1–21 threads the bilayer; the sequence is MASTASEIIAFMVSISGWVLV. Over 22–80 the chain is Extracellular; sequence SSTLPTDYWKVSTIDGTVITTATYWANLWKACVTDSTGVSNCKDFPSMLALDGYIQACR. The helical transmembrane segment at 81-101 threads the bilayer; the sequence is GLMIAAVSLGFFGSIFALFGM. Over 102 to 115 the chain is Cytoplasmic; sequence KCTKVGGSDKAKAK. The chain crosses the membrane as a helical span at residues 116–136; sequence IACLAGIVFILSGLCSMTGCS. At 137–160 the chain is on the extracellular side; that stretch reads LYANKITTEFFDPLFVEQKYELGA. A helical membrane pass occupies residues 161-181; the sequence is ALFIGWAGASLCIIGGVIFCF. Over 182–228 the chain is Cytoplasmic; it reads SISDNNKTPRYAYNGATSVMSSRTKYHGGEDFKTTNPSKQFDKNAYV.

Belongs to the claudin family. In terms of assembly, can form homodimers both in trans (interaction between CLDN10 molecules in opposing membranes) and in cis (interaction between CLDN10 molecules within one membrane). Interacts with CLDN19.

It localises to the cell junction. The protein resides in the tight junction. The protein localises to the cell membrane. The enzyme catalyses Na(+)(in) = Na(+)(out). It catalyses the reaction Li(+)(in) = Li(+)(out). The catalysed reaction is K(+)(in) = K(+)(out). It carries out the reaction Rb(+)(in) = Rb(+)(out). The enzyme catalyses Cs(+)(in) = Cs(+)(out). It catalyses the reaction NH4(+)(in) = NH4(+)(out). The catalysed reaction is methylamine(out) = methylamine(in). It carries out the reaction Mg(2+)(in) = Mg(2+)(out). The enzyme catalyses Ca(2+)(in) = Ca(2+)(out). It catalyses the reaction Sr(2+)(in) = Sr(2+)(out). The catalysed reaction is chloride(in) = chloride(out). It carries out the reaction nitrate(in) = nitrate(out). Its function is as follows. Forms paracellular channels: polymerizes in tight junction strands with cation- and anion-selective channels through the strands, conveying epithelial permeability in a process known as paracellular tight junction permeability. In sweat glands and in the thick ascending limb (TAL) of Henle's loop in kidney, it controls paracellular sodium permeability which is essential for proper sweat production and renal function. In renal proximal tubules, it conveys selective chloride over hydrogencarbonate anion permeability which is required for renal chloride reabsorption and salt homeostasis. This chain is Claudin-10 (CLDN10), found in Pongo abelii (Sumatran orangutan).